Reading from the N-terminus, the 222-residue chain is Deoxyribose-phosphate aldolase (222 aa).

Asp-92 (proton donor/acceptor) is an active-site residue. Lys-156 functions as the Schiff-base intermediate with acetaldehyde in the catalytic mechanism. The active-site Proton donor/acceptor is Lys-185.

Belongs to the DeoC/FbaB aldolase family. DeoC type 1 subfamily. In terms of assembly, homodimer.

It is found in the cytoplasm. It catalyses the reaction 2-deoxy-D-ribose 5-phosphate = D-glyceraldehyde 3-phosphate + acetaldehyde. Its pathway is carbohydrate degradation; 2-deoxy-D-ribose 1-phosphate degradation; D-glyceraldehyde 3-phosphate and acetaldehyde from 2-deoxy-alpha-D-ribose 1-phosphate: step 2/2. Shows high stability to high concentrations of acetaldehyde. In terms of biological role, catalyzes a reversible aldol reaction between acetaldehyde and D-glyceraldehyde 3-phosphate to generate 2-deoxy-D-ribose 5-phosphate. In Aciduliprofundum boonei (strain DSM 19572 / T469), this protein is Deoxyribose-phosphate aldolase.